Consider the following 248-residue polypeptide: Ubiquinone biosynthesis O-methyltransferase (248 aa).

S-adenosyl-L-methionine contacts are provided by R41, G72, D93, and M136.

The protein belongs to the methyltransferase superfamily. UbiG/COQ3 family.

The catalysed reaction is a 3-demethylubiquinol + S-adenosyl-L-methionine = a ubiquinol + S-adenosyl-L-homocysteine + H(+). The enzyme catalyses a 3-(all-trans-polyprenyl)benzene-1,2-diol + S-adenosyl-L-methionine = a 2-methoxy-6-(all-trans-polyprenyl)phenol + S-adenosyl-L-homocysteine + H(+). It participates in cofactor biosynthesis; ubiquinone biosynthesis. In terms of biological role, O-methyltransferase that catalyzes the 2 O-methylation steps in the ubiquinone biosynthetic pathway. The chain is Ubiquinone biosynthesis O-methyltransferase from Brucella anthropi (strain ATCC 49188 / DSM 6882 / CCUG 24695 / JCM 21032 / LMG 3331 / NBRC 15819 / NCTC 12168 / Alc 37) (Ochrobactrum anthropi).